The sequence spans 409 residues: Multifunctional CCA protein (409 aa).

Residues glycine 8 and arginine 11 each contribute to the ATP site. Residues glycine 8 and arginine 11 each coordinate CTP. 2 residues coordinate Mg(2+): aspartate 21 and aspartate 23. ATP-binding residues include arginine 91, arginine 137, and arginine 140. Arginine 91, arginine 137, and arginine 140 together coordinate CTP. One can recognise an HD domain in the interval 228–329 (TGAHTLSVLL…LELLQSFDVF (102 aa)).

Belongs to the tRNA nucleotidyltransferase/poly(A) polymerase family. Bacterial CCA-adding enzyme type 1 subfamily. Monomer. Can also form homodimers and oligomers. Requires Mg(2+) as cofactor. It depends on Ni(2+) as a cofactor.

It carries out the reaction a tRNA precursor + 2 CTP + ATP = a tRNA with a 3' CCA end + 3 diphosphate. The catalysed reaction is a tRNA with a 3' CCA end + 2 CTP + ATP = a tRNA with a 3' CCACCA end + 3 diphosphate. Functionally, catalyzes the addition and repair of the essential 3'-terminal CCA sequence in tRNAs without using a nucleic acid template. Adds these three nucleotides in the order of C, C, and A to the tRNA nucleotide-73, using CTP and ATP as substrates and producing inorganic pyrophosphate. tRNA 3'-terminal CCA addition is required both for tRNA processing and repair. Also involved in tRNA surveillance by mediating tandem CCA addition to generate a CCACCA at the 3' terminus of unstable tRNAs. While stable tRNAs receive only 3'-terminal CCA, unstable tRNAs are marked with CCACCA and rapidly degraded. The sequence is that of Multifunctional CCA protein from Pseudomonas fluorescens (strain ATCC BAA-477 / NRRL B-23932 / Pf-5).